The chain runs to 409 residues: UV excision repair protein RAD23 homolog B (409 aa).

The region spanning 1–79 is the Ubiquitin-like domain; that stretch reads MQVTLKTLQQ…VVVMVTKPKA (79 aa). The disordered stretch occupies residues 80-175; the sequence is VSTPAPATTQ…STSGDSSRSN (96 aa). Low complexity predominate over residues 81–143; it reads STPAPATTQQ…SSEPAPASAA (63 aa). Basic and acidic residues predominate over residues 144–153; it reads KQEKPAEKPA. A Phosphothreonine modification is found at Thr155. A Phosphoserine modification is found at Ser160. Positions 160–175 are enriched in polar residues; it reads SPTATDSTSGDSSRSN. A Phosphothreonine modification is found at Thr164. Ser174 is subject to Phosphoserine. Thr186 carries the phosphothreonine modification. A UBA 1 domain is found at 188 to 228; that stretch reads QSYENMVTEIMSMGYEREQVIAALRASFNNPDRAVEYLLMG. Residue Ser199 is modified to Phosphoserine. Residue Tyr202 is modified to Phosphotyrosine. The tract at residues 236–276 is disordered; it reads QAVVDPPQAASTGAPQSSAVAAAAATTTATTTTTSSGGHPL. A compositionally biased stretch (low complexity) spans 252–271; it reads SSAVAAAAATTTATTTTTSS. One can recognise an STI1 domain in the interval 274–317; that stretch reads HPLEFLRNQPQFQQMRQIIQQNPSLLPALLQQIGRENPQLLQQI. One can recognise a UBA 2 domain in the interval 364-404; sequence PQEKEAIERLKALGFPEGLVIQAYFACEKNENLAANFLLQQ.

It belongs to the RAD23 family. In terms of assembly, component of the XPC complex composed of XPC, RAD23B and CETN2. Interacts with NGLY1 and PSMC1. Interacts with ATXN3. Interacts with PSMD4 and PSMC5. Interacts with AMFR. Interacts with VCP; the interaction is indirect and mediated by NGLY1.

Its subcellular location is the nucleus. The protein localises to the cytoplasm. Functionally, multiubiquitin chain receptor involved in modulation of proteasomal degradation. Binds to polyubiquitin chains. Proposed to be capable to bind simultaneously to the 26S proteasome and to polyubiquitinated substrates and to deliver ubiquitinated proteins to the proteasome. May play a role in endoplasmic reticulum-associated degradation (ERAD) of misfolded glycoproteins by association with PNGase and delivering deglycosylated proteins to the proteasome. Involved in global genome nucleotide excision repair (GG-NER) by acting as component of the XPC complex. Cooperatively with CETN2 appears to stabilize XPC. May protect XPC from proteasomal degradation. Its function is as follows. The XPC complex is proposed to represent the first factor bound at the sites of DNA damage and together with other core recognition factors, XPA, RPA and the TFIIH complex, is part of the pre-incision (or initial recognition) complex. The XPC complex recognizes a wide spectrum of damaged DNA characterized by distortions of the DNA helix such as single-stranded loops, mismatched bubbles or single-stranded overhangs. The orientation of XPC complex binding appears to be crucial for inducing a productive NER. XPC complex is proposed to recognize and to interact with unpaired bases on the undamaged DNA strand which is followed by recruitment of the TFIIH complex and subsequent scanning for lesions in the opposite strand in a 5'-to-3' direction by the NER machinery. Cyclobutane pyrimidine dimers (CPDs) which are formed upon UV-induced DNA damage esacpe detection by the XPC complex due to a low degree of structural perurbation. Instead they are detected by the UV-DDB complex which in turn recruits and cooperates with the XPC complex in the respective DNA repair. In vitro, the XPC:RAD23B dimer is sufficient to initiate NER; it preferentially binds to cisplatin and UV-damaged double-stranded DNA and also binds to a variety of chemically and structurally diverse DNA adducts. XPC:RAD23B contacts DNA both 5' and 3' of a cisplatin lesion with a preference for the 5' side. XPC:RAD23B induces a bend in DNA upon binding. XPC:RAD23B stimulates the activity of DNA glycosylases TDG and SMUG1. In Homo sapiens (Human), this protein is UV excision repair protein RAD23 homolog B (RAD23B).